The sequence spans 141 residues: ATP synthase epsilon chain (141 aa).

This sequence belongs to the ATPase epsilon chain family. F-type ATPases have 2 components, CF(1) - the catalytic core - and CF(0) - the membrane proton channel. CF(1) has five subunits: alpha(3), beta(3), gamma(1), delta(1), epsilon(1). CF(0) has three main subunits: a, b and c.

It is found in the cell inner membrane. Functionally, produces ATP from ADP in the presence of a proton gradient across the membrane. In Paraburkholderia phymatum (strain DSM 17167 / CIP 108236 / LMG 21445 / STM815) (Burkholderia phymatum), this protein is ATP synthase epsilon chain.